Consider the following 353-residue polypeptide: Melatonin receptor type 1A (353 aa).

The disordered stretch occupies residues 1–26 (MRANGSELNGTVLPRDPPAEGSPRRP). Over 1 to 32 (MRANGSELNGTVLPRDPPAEGSPRRPPWVTST) the chain is Extracellular. N-linked (GlcNAc...) asparagine glycosylation is found at N4 and N9. A helical transmembrane segment spans residues 33-53 (LATILIFTIVVDLLGNLLVIL). Topologically, residues 54 to 66 (SVYRNKKLRNAGN) are cytoplasmic. Residues 67-87 (IFVVSLAIADLVVAIYPYPLV) form a helical membrane-spanning segment. The Extracellular portion of the chain corresponds to 88-105 (LTSVFHNGWNLGYLHCQI). The cysteines at positions 103 and 180 are disulfide-linked. Residues 106 to 126 (SGFLMGLSVIGSIFNITGIAI) form a helical membrane-spanning segment. Residues 127–145 (NRYCYICHSLKYDKLYSDK) lie on the Cytoplasmic side of the membrane. A helical transmembrane segment spans residues 146–166 (NSLCYVGLIWVLTVVAIVPNL). Residues 167–190 (FVGSLQYDPRIYSCTFAQSVSSAY) lie on the Extracellular side of the membrane. A helical membrane pass occupies residues 191 to 211 (TIAVVFFHFILPIAIVTYCYL). Over 212 to 243 (RIWILVIQVRRRVKPDNNPRLKPHDFRNFVTM) the chain is Cytoplasmic. The chain crosses the membrane as a helical span at residues 244-264 (FVVFVLFAVCWAPLNFIGLAV). The Extracellular segment spans residues 265–277 (AVDPETIIPRIPE). The helical transmembrane segment at 278 to 298 (WLFVSSYYMAYFNSCLNAIIY) threads the bilayer. Over 299–353 (GLLNQNFRREYKKIVVSFCTAKAFFQDSSNDAADRIRSKPSPLITNNNQVKVDSV) the chain is Cytoplasmic.

Belongs to the G-protein coupled receptor 1 family. In terms of tissue distribution, expressed in optic tectum and retina, less in neostriatum, hypothalamus and thalamus.

The protein resides in the cell membrane. High affinity receptor for melatonin. The activity of this receptor is mediated by pertussis toxin sensitive G proteins that inhibits adenylate cyclase activity. This is Melatonin receptor type 1A from Gallus gallus (Chicken).